The chain runs to 319 residues: Methionyl-tRNA formyltransferase (319 aa).

116 to 119 (SLLP) is a (6S)-5,6,7,8-tetrahydrofolate binding site.

This sequence belongs to the Fmt family.

It carries out the reaction L-methionyl-tRNA(fMet) + (6R)-10-formyltetrahydrofolate = N-formyl-L-methionyl-tRNA(fMet) + (6S)-5,6,7,8-tetrahydrofolate + H(+). Functionally, attaches a formyl group to the free amino group of methionyl-tRNA(fMet). The formyl group appears to play a dual role in the initiator identity of N-formylmethionyl-tRNA by promoting its recognition by IF2 and preventing the misappropriation of this tRNA by the elongation apparatus. This is Methionyl-tRNA formyltransferase from Wigglesworthia glossinidia brevipalpis.